The following is a 729-amino-acid chain: Leucine-rich repeat flightless-interacting protein 1 (729 aa).

Threonine 2 carries the N-acetylthreonine modification. Serine 16 is modified (phosphoserine). Residues 40–65 are compositionally biased toward basic and acidic residues; that stretch reads IRMKELERQQKEVEERPDKDFAEKGS. Positions 40–98 are disordered; it reads IRMKELERQQKEVEERPDKDFAEKGSRNMPSLSAATLASLGGTSSRRGSGDTSISMDTE. Over residues 78-94 the composition is skewed to low complexity; sequence SLGGTSSRRGSGDTSIS. Residues serine 83, serine 84, serine 88, aspartate 90, serine 92, and threonine 97 each carry the phosphoserine modification. Residues 94–194 adopt a coiled-coil conformation; sequence SMDTEASIRE…LRQREEMLEK (101 aa). Residue lysine 249 forms a Glycyl lysine isopeptide (Lys-Gly) (interchain with G-Cter in SUMO1) linkage. Positions 253 to 729 are disordered; that stretch reads VEKVGQRETL…SKSKEDCTMS (477 aa). A compositionally biased stretch (polar residues) spans 260-272; that stretch reads ETLQNSEQEQPKP. The span at 277–297 shows a compositional bias: basic and acidic residues; sequence DCVDRGVSHPGEKAENQRPAE. At serine 302 the chain carries Phosphoserine. The span at 313-326 shows a compositional bias: polar residues; it reads QQVQSQDQENTSDL. Residues 327-343 show a composition bias toward basic and acidic residues; it reads KNSEQIESHKVTNKSDS. The span at 344–354 shows a compositional bias: polar residues; the sequence is RASNSPEQSSC. 2 positions are modified to phosphoserine: serine 346 and serine 348. 2 stretches are compositionally biased toward basic and acidic residues: residues 435-445 and 482-494; these read KGTENHGESCL and KADD…EKPI. Positions 465-567 are DNA-binding; that stretch reads EEAIVQIPQA…KNKKKKAATP (103 aa). The segment covering 506 to 523 has biased composition (polar residues); the sequence is INQSGHQDTTGPGSTDAQ. Phosphoserine is present on residues serine 538 and serine 547. The segment covering 550–564 has biased composition (basic residues); it reads KKTKNKKKKNKKKKA. Over residues 608–618 the composition is skewed to basic and acidic residues; that stretch reads QKIRAGSREPV. Serine 614 and serine 670 each carry phosphoserine. Composition is skewed to polar residues over residues 667–684 and 693–710; these read CDTS…SQHG and LDNS…SESG. Residues 713 to 729 show a composition bias toward basic and acidic residues; the sequence is AREEVGNSKSKEDCTMS.

The protein belongs to the LRRFIP family. Homodimer. May also form higher oligomers. Interacts with FLII. Interacts with MYD88. Competes with FLII for MyD88-binding, even in the absence of LPS. As to expression, ubiquitously expressed.

The protein localises to the nucleus. Its subcellular location is the cytoplasm. In terms of biological role, transcriptional repressor which preferentially binds to the GC-rich consensus sequence (5'-AGCCCCCGGCG-3') and may regulate expression of TNF, EGFR and PDGFA. May control smooth muscle cells proliferation following artery injury through PDGFA repression. May also bind double-stranded RNA. Positively regulates Toll-like receptor (TLR) signaling in response to agonist probably by competing with the negative FLII regulator for MYD88-binding. This chain is Leucine-rich repeat flightless-interacting protein 1 (Lrrfip1), found in Mus musculus (Mouse).